A 405-amino-acid chain; its full sequence is Putative colanic acid biosynthesis glycosyl transferase WcaC (405 aa).

The protein operates within slime biogenesis; slime polysaccharide biosynthesis. The sequence is that of Putative colanic acid biosynthesis glycosyl transferase WcaC (wcaC) from Escherichia coli (strain K12).